The following is a 94-amino-acid chain: Integration host factor subunit beta (94 aa).

This sequence belongs to the bacterial histone-like protein family. Heterodimer of an alpha and a beta chain.

Its function is as follows. This protein is one of the two subunits of integration host factor, a specific DNA-binding protein that functions in genetic recombination as well as in transcriptional and translational control. In Serratia marcescens, this protein is Integration host factor subunit beta (ihfB).